Here is a 482-residue protein sequence, read N- to C-terminus: Major cardiolipin synthase ClsA (482 aa).

A run of 2 helical transmembrane segments spans residues 3-23 (ISSI…IIVI) and 34-54 (WAWL…YLLF). 2 PLD phosphodiesterase domains span residues 217-244 (LNYR…GDEY) and 395-422 (DNGF…DVRS). Active-site residues include His-222, Lys-224, Asp-229, His-400, Lys-402, and Asp-407.

This sequence belongs to the phospholipase D family. Cardiolipin synthase subfamily.

The protein localises to the cell membrane. It carries out the reaction 2 a 1,2-diacyl-sn-glycero-3-phospho-(1'-sn-glycerol) = a cardiolipin + glycerol. Catalyzes the reversible phosphatidyl group transfer from one phosphatidylglycerol molecule to another to form cardiolipin (CL) (diphosphatidylglycerol) and glycerol. This chain is Major cardiolipin synthase ClsA (clsA), found in Bacillus subtilis (strain 168).